The sequence spans 130 residues: Nascent polypeptide-associated complex protein (130 aa).

Residues 8-75 (PKMMRQMQKM…AKNIKKDDIK (68 aa)) form the NAC-A/B domain.

This sequence belongs to the NAC-alpha family. Homodimer. Interacts with the ribosome. Binds ribosomal RNA.

In terms of biological role, contacts the emerging nascent chain on the ribosome. This is Nascent polypeptide-associated complex protein from Methanococcus aeolicus (strain ATCC BAA-1280 / DSM 17508 / OCM 812 / Nankai-3).